A 146-amino-acid chain; its full sequence is MGRFIFMSFGFLVVFLSLSGTAADCPSDWSSYEGHCYKPFSEPKNWADAENFCTQQHAGGHLVSFQSSEEADFVVKLAFQTFGHSIFWMGLSNVWNQCNWQWSNAAMLRYKAWAEESYCVYFKSTNNKWRSRACRMMAQFVCEFQA.

Positions 1-23 are cleaved as a signal peptide; the sequence is MGRFIFMSFGFLVVFLSLSGTAA. The region spanning 24–146 is the C-type lectin domain; that stretch reads DCPSDWSSYE…MAQFVCEFQA (123 aa). Cystine bridges form between Cys-25/Cys-36, Cys-53/Cys-142, and Cys-119/Cys-134. 3 residues coordinate Ca(2+): Ser-64, Gln-66, and Glu-70. Glu-143 contacts Ca(2+).

Belongs to the snaclec family. As to quaternary structure, heterodimer with subunit A of IX/X-bp or IX-bp; disulfide-linked. In terms of tissue distribution, expressed by the venom gland.

It localises to the secreted. Functionally, when linked to subunit A of IX/X-bp, anticoagulant protein which binds to the gamma-carboxyglutamic acid-domain regions of factors IX (F9) and factor X (10) in the presence of calcium with a 1 to 1 stoichiometry. In terms of biological role, when linked to subunit A of IX-bp, anticoagulant protein which binds to the gamma-carboxyglutamic acid-domain regions of factor IX (but not to factor X) in the presence of calcium with a 1 to 1 stoichiometry. The sequence is that of Snaclec coagulation factor IX/factor X-binding protein subunit B from Protobothrops flavoviridis (Habu).